A 405-amino-acid chain; its full sequence is Cellobiose 2-epimerase (405 aa).

This sequence belongs to the cellobiose 2-epimerase family.

It carries out the reaction D-cellobiose = beta-D-glucosyl-(1-&gt;4)-D-mannopyranose. Its function is as follows. Catalyzes the reversible epimerization of cellobiose to 4-O-beta-D-glucopyranosyl-D-mannose (Glc-Man). Can also epimerize lactose to epilactose. This Eubacterium cellulosolvens protein is Cellobiose 2-epimerase (ce13).